Consider the following 422-residue polypeptide: Elongation factor 1-alpha (422 aa).

Residues 5-221 (KPHMNLAVIG…DELKEPEKPS (217 aa)) form the tr-type G domain. The G1 stretch occupies residues 14-21 (GHIDHGKS). 14–21 (GHIDHGKS) contacts GTP. Ser-21 contacts Mg(2+). Residues 70–74 (GITID) are G2. The G3 stretch occupies residues 91-94 (DCPG). GTP contacts are provided by residues 91 to 95 (DCPGH) and 146 to 149 (NKMD). Residues 146–149 (NKMD) are G4. Positions 185 to 187 (SAF) are G5.

This sequence belongs to the TRAFAC class translation factor GTPase superfamily. Classic translation factor GTPase family. EF-Tu/EF-1A subfamily.

The protein localises to the cytoplasm. The catalysed reaction is GTP + H2O = GDP + phosphate + H(+). Its function is as follows. GTP hydrolase that promotes the GTP-dependent binding of aminoacyl-tRNA to the A-site of ribosomes during protein biosynthesis. The polypeptide is Elongation factor 1-alpha (Methanosarcina acetivorans (strain ATCC 35395 / DSM 2834 / JCM 12185 / C2A)).